The following is a 333-amino-acid chain: Ornithine carbamoyltransferase (333 aa).

Residues 56–59, Arg-107, and 134–137 each bind carbamoyl phosphate; these read STRT and HPTQ. Residues Asn-167, Asp-231, and 235–236 contribute to the L-ornithine site; that span reads SM. Carbamoyl phosphate contacts are provided by residues 273-274 and Arg-318; that span reads CL.

It belongs to the aspartate/ornithine carbamoyltransferase superfamily. OTCase family.

It localises to the cytoplasm. It catalyses the reaction carbamoyl phosphate + L-ornithine = L-citrulline + phosphate + H(+). Its pathway is amino-acid degradation; L-arginine degradation via ADI pathway; carbamoyl phosphate from L-arginine: step 2/2. Reversibly catalyzes the transfer of the carbamoyl group from carbamoyl phosphate (CP) to the N(epsilon) atom of ornithine (ORN) to produce L-citrulline. In Clostridium botulinum (strain ATCC 19397 / Type A), this protein is Ornithine carbamoyltransferase.